Reading from the N-terminus, the 311-residue chain is MKTLALQLQGYLDHLTIERGVAANTLSSYRRDLRRYSKHLEERGITDLAKVGEHDVSEFLVALRRGDPDSGTAALSAVSAARALIAVRGLHRFAAAEGLAELDVARAVRPPTPSRRLPKSLTIDEVLSLLEGAGGDKPSDGPLTLRNRAVLELLYSTGARISEAVGLDLDDIDTHARSVLLRGKGGKQRLVPVGRPAVHALDAYLVRGRPDLARRGRGTAAIFLNARGGRLSRQSAWQVLQDAAERAGITAGVSPHMLRHSFATHLLEGGADVRVVQELLGHASVTTTQIYTLVTVHALREVWAGAHPRAR.

The 94-residue stretch at 2–95 (KTLALQLQGY…AVRGLHRFAA (94 aa)) folds into the Core-binding (CB) domain. In terms of domain architecture, Tyr recombinase spans 116–304 (RLPKSLTIDE…TVHALREVWA (189 aa)). Catalysis depends on residues Arg160, Lys184, His256, Arg259, and His282. Tyr291 functions as the O-(3'-phospho-DNA)-tyrosine intermediate in the catalytic mechanism.

It belongs to the 'phage' integrase family. XerD subfamily. Forms a cyclic heterotetrameric complex composed of two molecules of XerC and two molecules of XerD.

The protein localises to the cytoplasm. In terms of biological role, site-specific tyrosine recombinase, which acts by catalyzing the cutting and rejoining of the recombining DNA molecules. The XerC-XerD complex is essential to convert dimers of the bacterial chromosome into monomers to permit their segregation at cell division. It also contributes to the segregational stability of plasmids. This chain is Tyrosine recombinase XerD, found in Mycobacterium tuberculosis (strain CDC 1551 / Oshkosh).